The chain runs to 222 residues: Probable mitochondrial import inner membrane translocase subunit Tim17 3 (222 aa).

3 helical membrane-spanning segments follow: residues 16 to 36, 60 to 80, and 115 to 135; these read CGCAFMMGTIGGSLFEFLKGF, SIAGSFAVWGATFSTVDCALV, and ALVGCLVLAMIEGAGAAVATI.

It belongs to the Tim17/Tim22/Tim23 family. In terms of assembly, component of the TIM23 complex at least composed of Tim23, Tim17 (Tim17a1, Tim17a2 or Tim17b1) and a Tim50. The complex interacts with the Tim44 component of the PAM complex.

It is found in the mitochondrion inner membrane. Its function is as follows. Essential component of the TIM23 complex, a complex that mediates the translocation of transit peptide-containing proteins across the mitochondrial inner membrane. This is Probable mitochondrial import inner membrane translocase subunit Tim17 3 (Tim17a1) from Drosophila melanogaster (Fruit fly).